The sequence spans 270 residues: Aquaporin-11 (270 aa).

Helical transmembrane passes span 5–25 (IMTM…ISIC) and 59–79 (FELG…GLFF). The NPA 1 motif lies at 94–96 (DPS). A helical membrane pass occupies residues 120–140 (IMGAAVSYRFAKIFWSFGLMA). Residue N148 is glycosylated (N-linked (GlcNAc...) asparagine). Transmembrane regions (helical) follow at residues 153–173 (ASLQ…TIVN) and 184–204 (MLIS…VSGG). Residues 207–209 (NPT) carry the NPA 2 motif. Residues 220 to 240 (GLSGPSFFLVYWFGPILGSSI) traverse the membrane as a helical segment.

This sequence belongs to the MIP/aquaporin (TC 1.A.8) family.

It localises to the membrane. The enzyme catalyses H2O(in) = H2O(out). Functionally, probable intracellular unorthodox aquaporin that may modulate the water content and osmolytes during anhydrobiosis. In Milnesium tardigradum (Water bear), this protein is Aquaporin-11.